The primary structure comprises 274 residues: Protein LNK4 (274 aa).

The interval asparagine 209–glycine 249 is disordered. Residues glutamate 223–leucine 235 show a composition bias toward basic and acidic residues. Positions asparagine 236–glycine 249 are enriched in polar residues.

Interacts with REV8.

Functionally, probable transcriptional coactivator. The sequence is that of Protein LNK4 from Arabidopsis thaliana (Mouse-ear cress).